A 117-amino-acid chain; its full sequence is Hydrogenase maturation factor HypA (117 aa).

His-2 lines the Ni(2+) pocket. Positions 73, 76, 92, and 95 each coordinate Zn(2+).

This sequence belongs to the HypA/HybF family.

In terms of biological role, involved in the maturation of [NiFe] hydrogenases. Required for nickel insertion into the metal center of the hydrogenase. The sequence is that of Hydrogenase maturation factor HypA from Solidesulfovibrio magneticus (strain ATCC 700980 / DSM 13731 / RS-1) (Desulfovibrio magneticus).